The chain runs to 1946 residues: 1,3-beta-glucan synthase component (1946 aa).

Disordered stretches follow at residues 1-127 (MSGY…FSDF) and 152-198 (YGEG…KEPY). Low complexity-rich tracts occupy residues 24-34 (GYYQDDQYYDQ), 43-60 (GDHA…QGDG), and 91-109 (DDYY…NQGY). A compositionally biased stretch (polar residues) spans 165–180 (QLSYGGNRSSGASTPN). N-linked (GlcNAc...) asparagine glycosylation is found at Asn-171 and Asn-290. The segment at 297 to 316 (KRKAKKGKKKGGEAGNEAET) is disordered. Helical transmembrane passes span 489-509 (WFHL…MFWF), 537-557 (FSIV…ATLA), 576-596 (LLFL…VFMF), 618-638 (IGIV…VMPL), 675-695 (FGLW…YLTL), and 734-754 (IVLI…TYLF). 2 N-linked (GlcNAc...) asparagine glycosylation sites follow: Asn-1017 and Asn-1312. A run of 5 helical transmembrane segments spans residues 1356–1376 (NMFI…IGAL), 1413–1433 (CIIS…VQEL), 1500–1520 (FAGQ…FATS), 1523–1543 (WQPA…SPFL), and 1615–1635 (IFLT…VAYL). N-linked (GlcNAc...) asparagine glycosylation occurs at Asn-1649. A run of 5 helical transmembrane segments spans residues 1667 to 1687 (LAVV…AMFG), 1703 to 1723 (FGPV…IIFF), 1738 to 1758 (LAGI…IVSL), 1803 to 1823 (FSAD…LILI), and 1864 to 1884 (AILY…PGVI). An N-linked (GlcNAc...) asparagine glycan is attached at Asn-1918. The segment at 1920–1946 (TEGKTETGTKAGGADASATDASKLRLF) is disordered. The segment covering 1925–1940 (ETGTKAGGADASATDA) has biased composition (low complexity).

This sequence belongs to the glycosyltransferase 48 family. As to quaternary structure, component of the 1,3-beta-glucan synthase (GS) complex composed of a catalytic subunit GLS1 and a regulatory subunit RHO1.

The protein localises to the membrane. It is found in the cell membrane. The enzyme catalyses [(1-&gt;3)-beta-D-glucosyl](n) + UDP-alpha-D-glucose = [(1-&gt;3)-beta-D-glucosyl](n+1) + UDP + H(+). Activated by iron ions. Inhibited by manganese, copper and zinc ions. In terms of biological role, catalytic subunit of the 1,3-beta-glucan synthase (GS). Synthesizes 1,3-beta-glucan, a major structural component of the fungal cell wall. Involved in cell wall synthesis, maintenance and remodeling. In Cordyceps militaris (strain CM01) (Caterpillar fungus), this protein is 1,3-beta-glucan synthase component.